The primary structure comprises 297 residues: L-threonate dehydrogenase (297 aa).

Residues 3–31 (RNIG…VHAC) and T97 each bind NAD(+). K173 is an active-site residue. Residue K241 participates in NAD(+) binding.

The protein belongs to the HIBADH-related family. L-threonate dehydrogenase subfamily.

The enzyme catalyses L-threonate + NAD(+) = 2-dehydro-L-erythronate + NADH + H(+). Functionally, catalyzes oxidation of L-threonate to 2-oxo-tetronate. Can use either NAD(+) or NADP(+) as cosubstrate, with a preference for NAD(+). This chain is L-threonate dehydrogenase, found in Cupriavidus necator (strain ATCC 17699 / DSM 428 / KCTC 22496 / NCIMB 10442 / H16 / Stanier 337) (Ralstonia eutropha).